Here is a 289-residue protein sequence, read N- to C-terminus: tRNA (adenine(58)-N(1))-methyltransferase catalytic subunit TRMT61A (289 aa).

Ser-2 carries the post-translational modification N-acetylserine. Substrate contacts are provided by residues 20–22 (LGH), 35–42 (QTQTRHGV), 64–65 (GW), 85–89 (QILYS), and 110–117 (SGTGSGSV). S-adenosyl-L-methionine contacts are provided by residues Leu-87, 114 to 116 (SGS), Glu-135, Arg-140, 163 to 164 (DV), and Asp-181. Substrate-binding positions include 180–183 (LDIP) and 205–212 (SFSPCIEQ). The tract at residues 245–272 (LPPPDLGTGTDGPAGSDTSPFRSGTPMK) is disordered. Residues 250–259 (LGTGTDGPAG) show a composition bias toward low complexity. Ser-263 is modified (phosphoserine). Thr-278 contributes to the substrate binding site.

The protein belongs to the class I-like SAM-binding methyltransferase superfamily. TRM61 family. As to quaternary structure, heterotetramer; composed of two copies of TRMT6 and two copies of TRMT61A.

It is found in the nucleus. The catalysed reaction is adenosine(58) in tRNA + S-adenosyl-L-methionine = N(1)-methyladenosine(58) in tRNA + S-adenosyl-L-homocysteine + H(+). It catalyses the reaction an adenosine in mRNA + S-adenosyl-L-methionine = an N(1)-methyladenosine in mRNA + S-adenosyl-L-homocysteine + H(+). Functionally, catalytic subunit of tRNA (adenine-N(1)-)-methyltransferase, which catalyzes the formation of N(1)-methyladenine at position 58 (m1A58) in initiator methionyl-tRNA. Catalytic subunit of mRNA N(1)-methyltransferase complex, which mediates methylation of adenosine residues at the N(1) position of a small subset of mRNAs: N(1) methylation takes place in tRNA T-loop-like structures of mRNAs and is only present at low stoichiometries. The protein is tRNA (adenine(58)-N(1))-methyltransferase catalytic subunit TRMT61A (TRMT61A) of Homo sapiens (Human).